A 322-amino-acid chain; its full sequence is Phosphate acetyltransferase (322 aa).

The protein belongs to the phosphate acetyltransferase and butyryltransferase family.

It localises to the cytoplasm. It carries out the reaction acetyl-CoA + phosphate = acetyl phosphate + CoA. It functions in the pathway metabolic intermediate biosynthesis; acetyl-CoA biosynthesis; acetyl-CoA from acetate: step 2/2. The protein is Phosphate acetyltransferase (pta) of Mycoplasma capricolum subsp. capricolum (strain California kid / ATCC 27343 / NCTC 10154).